A 363-amino-acid chain; its full sequence is MSGEGKRLMVMAGGTGGHVFPGLAVAHHLMAQGWQVRWLGTADRMEADLVPKHGIEIDFIRISGLRGKGIWAQLSAPIRIFQAVRQARAIMRRYQPDVVLGMGGYVSGPGGLAAWLCGIPVVLHEQNGIAGLTNRWLSHIAKKVLQAFPGAFPKADVVGNPVRTDVLALPVPETRLADRSGPVRVLVVGGSQGARVLNQTLPGVAAQLGERVTIWHQVGKGALSTVQQAYQDVGQTQHKITEFIDDMAAAYAWADVVVCRSGALTVSEIAAAGLPALFVPFQHKDRQQYWNALPLEKAGAAKIIEQPQFNVAAVSEVLSGWDRATLLTMAQKARAVAIPDATDRVAAEVSAAAGSRATHVAHG.

UDP-N-acetyl-alpha-D-glucosamine contacts are provided by residues 15–17 (TGG), Asn127, Arg163, Ser191, Ile244, 263–268 (ALTVSE), and Gln288.

This sequence belongs to the glycosyltransferase 28 family. MurG subfamily.

Its subcellular location is the cell inner membrane. The catalysed reaction is di-trans,octa-cis-undecaprenyl diphospho-N-acetyl-alpha-D-muramoyl-L-alanyl-D-glutamyl-meso-2,6-diaminopimeloyl-D-alanyl-D-alanine + UDP-N-acetyl-alpha-D-glucosamine = di-trans,octa-cis-undecaprenyl diphospho-[N-acetyl-alpha-D-glucosaminyl-(1-&gt;4)]-N-acetyl-alpha-D-muramoyl-L-alanyl-D-glutamyl-meso-2,6-diaminopimeloyl-D-alanyl-D-alanine + UDP + H(+). It functions in the pathway cell wall biogenesis; peptidoglycan biosynthesis. Functionally, cell wall formation. Catalyzes the transfer of a GlcNAc subunit on undecaprenyl-pyrophosphoryl-MurNAc-pentapeptide (lipid intermediate I) to form undecaprenyl-pyrophosphoryl-MurNAc-(pentapeptide)GlcNAc (lipid intermediate II). The sequence is that of UDP-N-acetylglucosamine--N-acetylmuramyl-(pentapeptide) pyrophosphoryl-undecaprenol N-acetylglucosamine transferase from Pectobacterium carotovorum subsp. carotovorum (strain PC1).